A 383-amino-acid chain; its full sequence is 8-amino-7-oxononanoate synthase (383 aa).

Residues arginine 27 and arginine 34 each contribute to the substrate site. Residue 114-115 (GY) coordinates pyridoxal 5'-phosphate. Histidine 139 serves as a coordination point for substrate. Residues serine 187, 212–215 (DDAH), and 232–235 (TLSK) contribute to the pyridoxal 5'-phosphate site. Lysine 235 bears the N6-(pyridoxal phosphate)lysine mark. Substrate is bound at residue threonine 344.

Belongs to the class-II pyridoxal-phosphate-dependent aminotransferase family. BioF subfamily. Homodimer. Pyridoxal 5'-phosphate serves as cofactor.

It catalyses the reaction 6-carboxyhexanoyl-[ACP] + L-alanine + H(+) = (8S)-8-amino-7-oxononanoate + holo-[ACP] + CO2. It participates in cofactor biosynthesis; biotin biosynthesis. In terms of biological role, catalyzes the decarboxylative condensation of pimeloyl-[acyl-carrier protein] and L-alanine to produce 8-amino-7-oxononanoate (AON), [acyl-carrier protein], and carbon dioxide. The polypeptide is 8-amino-7-oxononanoate synthase (Methylorubrum extorquens (strain PA1) (Methylobacterium extorquens)).